We begin with the raw amino-acid sequence, 257 residues long: Aspartate/glutamate leucyltransferase (257 aa).

This sequence belongs to the R-transferase family. Bpt subfamily.

Its subcellular location is the cytoplasm. It catalyses the reaction N-terminal L-glutamyl-[protein] + L-leucyl-tRNA(Leu) = N-terminal L-leucyl-L-glutamyl-[protein] + tRNA(Leu) + H(+). It carries out the reaction N-terminal L-aspartyl-[protein] + L-leucyl-tRNA(Leu) = N-terminal L-leucyl-L-aspartyl-[protein] + tRNA(Leu) + H(+). Its function is as follows. Functions in the N-end rule pathway of protein degradation where it conjugates Leu from its aminoacyl-tRNA to the N-termini of proteins containing an N-terminal aspartate or glutamate. The polypeptide is Aspartate/glutamate leucyltransferase (Leptospira interrogans serogroup Icterohaemorrhagiae serovar copenhageni (strain Fiocruz L1-130)).